Consider the following 686-residue polypeptide: DNA ligase (686 aa).

Residues 34-38 (DAEYD), 83-84 (SI), and E120 each bind NAD(+). K122 functions as the N6-AMP-lysine intermediate in the catalytic mechanism. NAD(+) is bound by residues R143, E180, K298, and K322. Positions 420, 423, 438, and 444 each coordinate Zn(2+). Residues 603 to 686 (QSGGILSGKT…ALLGSNKKNG (84 aa)) enclose the BRCT domain.

Belongs to the NAD-dependent DNA ligase family. LigA subfamily. It depends on Mg(2+) as a cofactor. Mn(2+) serves as cofactor.

It catalyses the reaction NAD(+) + (deoxyribonucleotide)n-3'-hydroxyl + 5'-phospho-(deoxyribonucleotide)m = (deoxyribonucleotide)n+m + AMP + beta-nicotinamide D-nucleotide.. Functionally, DNA ligase that catalyzes the formation of phosphodiester linkages between 5'-phosphoryl and 3'-hydroxyl groups in double-stranded DNA using NAD as a coenzyme and as the energy source for the reaction. It is essential for DNA replication and repair of damaged DNA. The polypeptide is DNA ligase (Thiobacillus denitrificans (strain ATCC 25259 / T1)).